Here is a 487-residue protein sequence, read N- to C-terminus: 1-aminocyclopropane-1-carboxylate synthase 1 (487 aa).

At lysine 286 the chain carries N6-(pyridoxal phosphate)lysine.

Belongs to the class-I pyridoxal-phosphate-dependent aminotransferase family. In terms of assembly, homodimer. It depends on pyridoxal 5'-phosphate as a cofactor.

The enzyme catalyses S-adenosyl-L-methionine = 1-aminocyclopropane-1-carboxylate + S-methyl-5'-thioadenosine + H(+). Its pathway is alkene biosynthesis; ethylene biosynthesis via S-adenosyl-L-methionine; ethylene from S-adenosyl-L-methionine: step 1/2. Catalyzes the formation of 1-aminocyclopropane-1-carboxylate, a direct precursor of ethylene in higher plants. In Oryza sativa subsp. indica (Rice), this protein is 1-aminocyclopropane-1-carboxylate synthase 1 (ACC1).